We begin with the raw amino-acid sequence, 1222 residues long: MDNNNNNFSTPKQPTINSTTGGQLRSRSNSSPSTSSISTPRNGSTTATTSSITNSIGKGSLVFSTMENAKKTLNMDSLSTPMSQSSKKRLSMNSSLLPPSSIPLPPSQQLSAKKDPSKRHSSFISTTTTTSLGSRPSTPQPNHTTNNNNNNNNGSNGNNVTSTNISSMLESNNSEILSQNQKVTLSTSSNTAFSSLPSSTNNGNNPLSNSGGGNGNHHLVNSNSSTSTPSPTMFISTTSPPPELSLMEGFNQHNLTTTTTTTTTTTNNTLNTSNGINSNSLSPSSHLNNGSNNNNNNNHLNLNNRSSSPSPTPSSSSISGRRTPIQNFNSVGGVNITSKTQPLFSDREESIQAVCRFRPETAAEQTLGPSEKQLTIGTDQTTIHITPTSSSSSSMAQAFRFSKVYQPNTTQESFYNEVGKPLIDNIVNGYNVGIIAYGQTGAGKTFSLGFSGGEGNDSYNSYCNRSEFYNNSHYLYGSQQQQQQQQLLPSSWGIMPRIIKDLFIKQDEQQSMNTPQRIKFTTKISYLEVYKEKVYDLLSEGGVNDIEIRMADGGFIVPDAVQSSIQTFTDFLTHLQHIEKNRKIAETKKNMASSRSHAIFIVSLLKEDLENKMTVTSLLYLVDLAGSESASKIDGTTSKIEETKSINKSLYALGGVIEDMSKNSKHVRYRDSKLTQLLQQCFGGNSKTCLIVNCSSSNHESVIRETIQSLNFGQRAQSVKNKPLQNVEESHSELKAKLRELNKDIETYKKFIEKISINSGVIPPSSVATYITQLQNACEELKKKNDRLQEDIINLEEENSDLPKKFNVLNKNNVSQIEILTQELELSKQINQEQLLKIEQYSQKYQATNEEIQKSFNHRQQLVNDLHDSNEKSKQLELKLKDALLNSKSESDEIRLKLTKALEESTDKDQRINTLESNKQKWKSKCNEVVRQSKELQDRLNILQSTYSNSVDSLSNSSLNNNNNESLEEIKKLKLNISSLTNQHIEREKSLQKEIDLARSKHTEQTLILKNLKTQIDTLTNKLEIQFPTIVNNNQQQQQSTQSSSSSSIESNLIISMNTIEVLFEKICKNQEQTNTIISTNVESIMGKLVEIDENEEFIRKEKDRERERAENLKNTLEDAQSNFLKQQEEIKQFIETQLKNKNNINNNNNIKNNNNNNKLKSKKVGSSSSSSSNIGSSICINILFFLIILVILFFLMVAVGLTIQNQDYNSQYRSSYFFKTT.

Over residues 1–25 the composition is skewed to polar residues; that stretch reads MDNNNNNFSTPKQPTINSTTGGQLR. Disordered stretches follow at residues 1–55, 75–165, and 188–343; these read MDNN…ITNS, MDSL…STNI, and SSNT…TQPL. The span at 26 to 55 shows a compositional bias: low complexity; sequence SRSNSSPSTSSISTPRNGSTTATTSSITNS. The segment covering 75–85 has biased composition (polar residues); it reads MDSLSTPMSQS. 4 stretches are compositionally biased toward low complexity: residues 122–165, 194–209, 216–238, and 254–325; these read SFIS…STNI, SSLPSSTNNGNNPLSN, NHHLVNSNSSTSTPSPTMFISTT, and NLTT…RTPI. Polar residues predominate over residues 326-343; it reads QNFNSVGGVNITSKTQPL. The region spanning 350 to 719 is the Kinesin motor domain; the sequence is SIQAVCRFRP…LNFGQRAQSV (370 aa). Residue 438–445 participates in ATP binding; it reads GQTGAGKT. The stretch at 724–1026 forms a coiled coil; sequence LQNVEESHSE…DTLTNKLEIQ (303 aa). A disordered region spans residues 1144 to 1174; it reads NINNNNNIKNNNNNNKLKSKKVGSSSSSSSN. The chain crosses the membrane as a helical span at residues 1183-1203; sequence ILFFLIILVILFFLMVAVGLT.

Belongs to the TRAFAC class myosin-kinesin ATPase superfamily. Kinesin family.

The protein localises to the membrane. It localises to the cytoplasm. It is found in the cytoskeleton. Functionally, microtubule-associated force-producing protein that plays a role in organelle transport. Its motor activity is directed toward the microtubule's plus end. The polypeptide is Kinesin-related protein 9 (kif9) (Dictyostelium discoideum (Social amoeba)).